We begin with the raw amino-acid sequence, 222 residues long: MDSRMLSDQRFCRRIFAAALCVLVLLADSGCARNLWKRALHLKMTEKYDDYEYPLHSHSAHYQKNDRCPPPPQTLPDRACEVPSCRSDSECERHKRCCYNGCIYACLESVQPPPVLDWLVQPKPRWLGGNGWLLDGPEEVLQAEACSTTEDGDEPLHCPTGYECHIINPGNTAEGIPNRGQCIKLRGNPDGRNLRHKYYKEYFGSNSNNVVGYVKNQQKHLG.

Positions 1-32 (MDSRMLSDQRFCRRIFAAALCVLVLLADSGCA) are cleaved as a signal peptide. Positions 61-110 (HYQKNDRCPPPPQTLPDRACEVPSCRSDSECERHKRCCYNGCIYACLESV) constitute a WAP domain. 4 cysteine pairs are disulfide-bonded: C68–C98, C80–C102, C85–C97, and C91–C106.

It is found in the secreted. Its function is as follows. Has growth inhibitory activity. In Gallus gallus (Chicken), this protein is WAP four-disulfide core domain protein 1 (WFDC1).